The primary structure comprises 200 residues: Protein GrpE (200 aa).

A compositionally biased stretch (acidic residues) spans 1-23 (MEEEIKETSEDKEEENTEAEAVE). Positions 1 to 39 (MEEEIKETSEDKEEENTEAEAVENNEKSEENAGNVEEDE) are disordered.

The protein belongs to the GrpE family. In terms of assembly, homodimer.

The protein localises to the cytoplasm. Functionally, participates actively in the response to hyperosmotic and heat shock by preventing the aggregation of stress-denatured proteins, in association with DnaK and GrpE. It is the nucleotide exchange factor for DnaK and may function as a thermosensor. Unfolded proteins bind initially to DnaJ; upon interaction with the DnaJ-bound protein, DnaK hydrolyzes its bound ATP, resulting in the formation of a stable complex. GrpE releases ADP from DnaK; ATP binding to DnaK triggers the release of the substrate protein, thus completing the reaction cycle. Several rounds of ATP-dependent interactions between DnaJ, DnaK and GrpE are required for fully efficient folding. The chain is Protein GrpE from Brachyspira hyodysenteriae (strain ATCC 49526 / WA1).